The primary structure comprises 396 residues: Probable sugar efflux transporter (396 aa).

A run of 12 helical transmembrane segments spans residues Val15–Met35, Gly51–Ala71, Leu84–Leu104, Met109–Ile129, Gln137–Gly157, Val168–Leu188, Pro209–Tyr229, Asn245–Phe265, Phe276–Glu296, Thr297–Leu317, Val333–Gly353, and Ile365–Leu385.

The protein belongs to the major facilitator superfamily. SotB (TC 2.A.1.2) family.

Its subcellular location is the cell inner membrane. Involved in the efflux of sugars. The physiological role may be the reduction of the intracellular concentration of toxic sugars or sugar metabolites. The polypeptide is Probable sugar efflux transporter (Haemophilus influenzae (strain PittGG)).